A 132-amino-acid chain; its full sequence is NLP effector protein 15 (132 aa).

The Conserved undecapeptide motif I motif lies at 1–9; it reads MYSWYFPKD. A Hepta-peptide GHRHDWE motif II motif is present at residues 16–22; sequence GHRHDWE.

This sequence belongs to the Necrosis inducing protein (NPP1) family.

The protein localises to the secreted. Secreted effector that contributes moderately to virulence during infection by P.capsici. Causes only small yellow areas at 3 days after inoculation of host C.annuum leaves; these areas expand somewhat and became necrotic at 7 days after inoculation. Leads only to chlorotic areas, without necrosis at 7 days after non-host N.benthamiana leaves infection. In Phytophthora capsici, this protein is NLP effector protein 15.